Consider the following 219-residue polypeptide: Uridylate kinase (219 aa).

9–10 (GS) serves as a coordination point for ATP. Gly-41 contacts UMP. Positions 42 and 46 each coordinate ATP. UMP is bound by residues Asp-63 and 110–116 (TFPGHTT). Residues Thr-136, Asn-137, Tyr-142, and Asp-145 each contribute to the ATP site.

The protein belongs to the UMP kinase family. Homohexamer.

It is found in the cytoplasm. The catalysed reaction is UMP + ATP = UDP + ADP. The protein operates within pyrimidine metabolism; CTP biosynthesis via de novo pathway; UDP from UMP (UMPK route): step 1/1. Inhibited by UTP. Catalyzes the reversible phosphorylation of UMP to UDP. The chain is Uridylate kinase from Archaeoglobus fulgidus (strain ATCC 49558 / DSM 4304 / JCM 9628 / NBRC 100126 / VC-16).